A 261-amino-acid polypeptide reads, in one-letter code: Ribosome biogenesis protein NSA2 (261 aa).

Positions 1 to 22 are enriched in basic and acidic residues; sequence MPQNEYIEKHIKQHGRRLDHEE. 2 disordered regions span residues 1–39 and 61–85; these read MPQN…AKDA and MKKK…NDGE. A Nuclear localization signal motif is present at residues 15–22; it reads GRRLDHEE.

It belongs to the eukaryotic ribosomal protein eS8 family. Ribosome biogenesis protein NSA2 subfamily. As to quaternary structure, component of the pre-66S ribosomal particle. Interacts with NOP7 and RRP1. Interacts with RSA4 (via WD repeats).

It is found in the nucleus. The protein localises to the nucleolus. Involved in the biogenesis of the 60S ribosomal subunit. May play a part in the quality control of pre-60S particles. The polypeptide is Ribosome biogenesis protein NSA2 (NSA2) (Meyerozyma guilliermondii (strain ATCC 6260 / CBS 566 / DSM 6381 / JCM 1539 / NBRC 10279 / NRRL Y-324) (Yeast)).